The sequence spans 65 residues: Large ribosomal subunit protein bL35 (65 aa).

Residues 1–46 (MPKMKTRQSAAKRYEVTGSGKLRRRRAGKNHLLQHKSAARKRSLST) are disordered. A compositionally biased stretch (basic residues) spans 21 to 44 (KLRRRRAGKNHLLQHKSAARKRSL).

Belongs to the bacterial ribosomal protein bL35 family.

This is Large ribosomal subunit protein bL35 from Gloeobacter violaceus (strain ATCC 29082 / PCC 7421).